Consider the following 340-residue polypeptide: Arginine N-succinyltransferase subunit beta (340 aa).

This sequence belongs to the succinylarginine dihydrolase family. As to quaternary structure, heterotetramer of two alpha and two beta subunits.

It catalyses the reaction succinyl-CoA + L-arginine = N(2)-succinyl-L-arginine + CoA + H(+). The protein operates within amino-acid degradation; L-arginine degradation via AST pathway; L-glutamate and succinate from L-arginine: step 1/5. The sequence is that of Arginine N-succinyltransferase subunit beta (aruG) from Pseudomonas aeruginosa (strain ATCC 15692 / DSM 22644 / CIP 104116 / JCM 14847 / LMG 12228 / 1C / PRS 101 / PAO1).